Here is a 362-residue protein sequence, read N- to C-terminus: Peptide chain release factor 1 (362 aa).

Gln236 carries the N5-methylglutamine modification.

Belongs to the prokaryotic/mitochondrial release factor family. In terms of processing, methylated by PrmC. Methylation increases the termination efficiency of RF1.

The protein localises to the cytoplasm. In terms of biological role, peptide chain release factor 1 directs the termination of translation in response to the peptide chain termination codons UAG and UAA. This chain is Peptide chain release factor 1, found in Lactobacillus helveticus (strain DPC 4571).